We begin with the raw amino-acid sequence, 147 residues long: Large ribosomal subunit protein uL15 (147 aa).

Residues 1-55 (MKLHEIAPQPGSTKRRRRVGRGVSAGQGASCGLGMRGQKSRSGTGTRPGFEGGQM) form a disordered region. A compositionally biased stretch (gly residues) spans 23–35 (VSAGQGASCGLGM).

It belongs to the universal ribosomal protein uL15 family. Part of the 50S ribosomal subunit.

Functionally, binds to the 23S rRNA. This Microcystis aeruginosa (strain NIES-843 / IAM M-2473) protein is Large ribosomal subunit protein uL15.